Reading from the N-terminus, the 459-residue chain is Ribulose bisphosphate carboxylase large chain (459 aa).

At K4 the chain carries N6,N6,N6-trimethyllysine. Residues N113 and T163 each contribute to the substrate site. K165 functions as the Proton acceptor in the catalytic mechanism. Residue K167 participates in substrate binding. Mg(2+) is bound by residues K191, D193, and E194. Position 191 is an N6-carboxylysine (K191). Residue H284 is the Proton acceptor of the active site. Substrate contacts are provided by R285, H317, and S369.

It belongs to the RuBisCO large chain family. Type I subfamily. In terms of assembly, heterohexadecamer of 8 large chains and 8 small chains; disulfide-linked. The disulfide link is formed within the large subunit homodimers. Mg(2+) is required as a cofactor. In terms of processing, the disulfide bond which can form in the large chain dimeric partners within the hexadecamer appears to be associated with oxidative stress and protein turnover.

It localises to the plastid. The protein resides in the chloroplast. It catalyses the reaction 2 (2R)-3-phosphoglycerate + 2 H(+) = D-ribulose 1,5-bisphosphate + CO2 + H2O. The enzyme catalyses D-ribulose 1,5-bisphosphate + O2 = 2-phosphoglycolate + (2R)-3-phosphoglycerate + 2 H(+). RuBisCO catalyzes two reactions: the carboxylation of D-ribulose 1,5-bisphosphate, the primary event in carbon dioxide fixation, as well as the oxidative fragmentation of the pentose substrate in the photorespiration process. Both reactions occur simultaneously and in competition at the same active site. The sequence is that of Ribulose bisphosphate carboxylase large chain from Roridula gorgonias (South African fly bush).